The chain runs to 379 residues: Eukaryotic translation initiation factor 3 subunit M (379 aa).

Residues 179 to 341 (RSEEASKVMI…RKVIISSVAQ (163 aa)) enclose the PCI domain.

This sequence belongs to the eIF-3 subunit M family. As to quaternary structure, component of the eukaryotic translation initiation factor 3 (eIF-3) complex.

The protein resides in the cytoplasm. Its function is as follows. Component of the eukaryotic translation initiation factor 3 (eIF-3) complex, which is involved in protein synthesis of a specialized repertoire of mRNAs and, together with other initiation factors, stimulates binding of mRNA and methionyl-tRNAi to the 40S ribosome. The eIF-3 complex specifically targets and initiates translation of a subset of mRNAs involved in cell proliferation. This chain is Eukaryotic translation initiation factor 3 subunit M, found in Nematostella vectensis (Starlet sea anemone).